A 382-amino-acid polypeptide reads, in one-letter code: Serine protease 23 (382 aa).

Residues 1-22 form the signal peptide; it reads MAGIPGLFILLVLLCVFMQVSP. An N-linked (GlcNAc...) asparagine glycan is attached at asparagine 92. The cysteines at positions 159 and 175 are disulfide-linked. Histidine 174 serves as the catalytic Charge relay system. Asparagine 206 is a glycosylation site (N-linked (GlcNAc...) asparagine). Catalysis depends on charge relay system residues aspartate 239 and serine 315.

Belongs to the peptidase S1 family.

Its subcellular location is the secreted. This is Serine protease 23 (Prss23) from Mus musculus (Mouse).